Consider the following 441-residue polypeptide: Protein arginine methyltransferase NDUFAF7, mitochondrial (441 aa).

The N-terminal 46 residues, Met1 to His46, are a transit peptide targeting the mitochondrion. Residues Gly415–Gly434 are disordered. The span at His418–Pro427 shows a compositional bias: polar residues.

It belongs to the NDUFAF7 family. Interacts with NDUFS2.

The protein resides in the mitochondrion. The catalysed reaction is L-arginyl-[protein] + 2 S-adenosyl-L-methionine = N(omega),N(omega)'-dimethyl-L-arginyl-[protein] + 2 S-adenosyl-L-homocysteine + 2 H(+). Arginine methyltransferase involved in the assembly or stability of mitochondrial NADH:ubiquinone oxidoreductase complex (complex I). Acts by mediating symmetric dimethylation of 'Arg-118' of NDUFS2 after it assembles into the complex I, stabilizing the early intermediate complex. The sequence is that of Protein arginine methyltransferase NDUFAF7, mitochondrial from Bos taurus (Bovine).